Here is a 306-residue protein sequence, read N- to C-terminus: Reticulocalbin-2 (306 aa).

An N-terminal signal peptide occupies residues 1 to 22 (MESPTLLGLLLLLLGGPGTSLG). EF-hand domains lie at 50 to 85 (EQQK…SFKS), 86 to 121 (YIIE…RVID), 144 to 173 (KKRF…EEAD), 175 to 210 (MKEF…DPAA), 226 to 251 (NDYD…NNEG), and 252 to 287 (LAQE…FLNS). Residues aspartate 99, aspartate 101, aspartate 103, arginine 105, and glutamate 110 each coordinate Ca(2+). The Ca(2+) site is built by aspartate 188, aspartate 190, aspartate 192, glutamate 199, aspartate 229, aspartate 231, aspartate 233, lysine 235, glutamate 240, aspartate 265, aspartate 267, aspartate 269, arginine 271, and glutamate 276.

Belongs to the CREC family. As to quaternary structure, may bind phospholipase A2, since the rat reticulocalbin-2 has been isolated on the phospholipase complex taipoxin columns. Expressed by the venom gland.

It localises to the secreted. This chain is Reticulocalbin-2, found in Crotalus adamanteus (Eastern diamondback rattlesnake).